The following is a 360-amino-acid chain: DNA ADP-ribosyl glycohydrolase (360 aa).

The Macro domain maps to 1-155 (MLRFVRGNLL…VYEPVENPKA (155 aa)). ADP-D-ribose contacts are provided by residues 8 to 9 (NL), 20 to 22 (TVN), 31 to 34 (VALQ), and Thr-79. Residue Lys-80 is the Nucleophile of the active site. 117-121 (GAGNG) serves as a coordination point for ADP-D-ribose. The interval 167 to 338 (LTPARAALLK…VALDALLKRG (172 aa)) is interaction with DarT.

The protein belongs to the DarG ADP-ribosyl glycohydrolase family. Interacts (via C-terminus) with cognate toxin DarT; this heterodimeric complex neutralizes the toxic effect of DarT by preventing ssDNA binding to DarT and consequently inactivating the toxin by direct protein-protein interactions.

The catalysed reaction is an N-(ADP-alpha-D-ribosyl)-thymidine in DNA + H2O = a thymidine in DNA + ADP-D-ribose. Antitoxin component of the hybrid type II/IV toxin-antitoxin (TA) system DarTG, which plays a crucial role in controlling bacterial growth and bacteriophage infection. De-ADP-ribosylates DNA modified on thymidine by its cognate toxin DarT, which neutralizes the activity of cognate toxin DarT. Upon expression in E.coli neutralizes the effect of cognate toxin DarT. Upon expression in M.tuberculosis neutralizes the toxic effects of endogenous DarT. The chain is DNA ADP-ribosyl glycohydrolase from Thermus aquaticus (strain ATCC BAA-2747 / Y51MC23).